Here is a 460-residue protein sequence, read N- to C-terminus: Keratin, type I cytoskeletal 27 (460 aa).

A head region spans residues 1-83 (MSVRFSSASR…GNEHGLLSGN (83 aa)). Residues 84–119 (EKVTMQNLNDRLASYLDNVRALEEANADLEQKIKGW) are coil 1A. The region spanning 84-399 (EKVTMQNLND…RLIDGEDGSC (316 aa)) is the IF rod domain. Residues 120 to 141 (YEKFGPGSCRGLDHDYSRYFTV) are linker 1. The interval 142-233 (IDDLRNQIIS…KNHEEEMKAL (92 aa)) is coil 1B. The linker 12 stretch occupies residues 234–256 (QCAAGGNVNVEMNAAPGVDLTVL). Positions 257–395 (LNNMRAEYEA…ETYCRLIDGE (139 aa)) are coil 2. Positions 396-460 (DGSCTKSKGY…NMKSEQRVPS (65 aa)) are tail. A disordered region spans residues 429-460 (DPRGKVPSSRVHTVEEKSTKVNNMKSEQRVPS). A compositionally biased stretch (polar residues) spans 448 to 460 (KVNNMKSEQRVPS).

Belongs to the intermediate filament family. As to quaternary structure, heterotetramer of two type I and two type II keratins. Interacts with KRT6A to form filaments.

Its subcellular location is the cytoplasm. Functionally, essential for the proper assembly of type I and type II keratin protein complexes and formation of keratin intermediate filaments in the inner root sheath (irs). In Capra hircus (Goat), this protein is Keratin, type I cytoskeletal 27.